We begin with the raw amino-acid sequence, 394 residues long: MANEKFIRNKPHLNVGTIGHVDHGKTTLTAAITQVLSTRGLAKSRAYDQIDNAPEERERGITIKTSHVEYETEKRHYAHVDCPGHADYVKNMITGAAQMDAAILVVSGADSVMPQTREHILLARQVGVPKIVVFLNKCDLSPDEQILELVEMEVRELLSQYDFPGDDIPVIRGSALKALEGDAHYVAQVNELIETLDTYIEDPVREVDKPFLMPVEDVFTITGRGTVVTGRVERGQVKAGDEVEIVGLKETRKTIVTAVEMFKKDLDFAQAGDNVGALLRGINREDVQRGQVLAKPGSVKPHSKFVAQVYVLTKEEGGRHTAFFSQYRPQFYFRTTDITGVVELQGDVKMVMPGDNAELVVTLNNPIAIEEGTKFSIREGGKTVGAGSVSKLLN.

The 195-residue stretch at Lys10–Val204 folds into the tr-type G domain. The tract at residues Gly19–Thr26 is G1. Gly19 to Thr26 provides a ligand contact to GTP. Thr26 contributes to the Mg(2+) binding site. Residues Gly60 to Lys64 form a G2 region. A G3 region spans residues Asp81–Gly84. GTP-binding positions include Asp81–His85 and Asn136–Asp139. The interval Asn136–Asp139 is G4. The tract at residues Ser174–Leu176 is G5.

The protein belongs to the TRAFAC class translation factor GTPase superfamily. Classic translation factor GTPase family. EF-Tu/EF-1A subfamily. In terms of assembly, monomer.

The protein localises to the cytoplasm. The enzyme catalyses GTP + H2O = GDP + phosphate + H(+). In terms of biological role, GTP hydrolase that promotes the GTP-dependent binding of aminoacyl-tRNA to the A-site of ribosomes during protein biosynthesis. This is Elongation factor Tu from Onion yellows phytoplasma (strain OY-M).